A 783-amino-acid polypeptide reads, in one-letter code: Endonuclease MutS2 (783 aa).

Residue 328-335 (GPNTGGKT) coordinates ATP. The region spanning 708–783 (LDLRGKRYEE…GSGCTIATLG (76 aa)) is the Smr domain.

Belongs to the DNA mismatch repair MutS family. MutS2 subfamily. In terms of assembly, homodimer. Binds to stalled ribosomes, contacting rRNA.

Its function is as follows. Endonuclease that is involved in the suppression of homologous recombination and thus may have a key role in the control of bacterial genetic diversity. Acts as a ribosome collision sensor, splitting the ribosome into its 2 subunits. Detects stalled/collided 70S ribosomes which it binds and splits by an ATP-hydrolysis driven conformational change. Acts upstream of the ribosome quality control system (RQC), a ribosome-associated complex that mediates the extraction of incompletely synthesized nascent chains from stalled ribosomes and their subsequent degradation. Probably generates substrates for RQC. The chain is Endonuclease MutS2 from Streptococcus thermophilus (strain CNRZ 1066).